A 782-amino-acid polypeptide reads, in one-letter code: ATP-dependent 6-phosphofructokinase, muscle type (782 aa).

T2 carries the post-translational modification N-acetylthreonine. An N-terminal catalytic PFK domain 1 region spans residues 2-390 (THEEHHAAKT…NWEVYKLLAH (389 aa)). Residues G25, 88 to 89 (RC), and 118 to 121 (GDGS) contribute to the ATP site. Residue D119 participates in Mg(2+) binding. S133 is subject to Phosphoserine. Residues 164–166 (SID), R201, 208–210 (MGR), E264, R292, and 298–301 (HVQR) contribute to the substrate site. D166 functions as the Proton acceptor in the catalytic mechanism. S377 carries the post-translational modification Phosphoserine. Positions 391 to 403 (IRPPVSKTSATMH) are interdomain linker. A C-terminal regulatory PFK domain 2 region spans residues 404–782 (TVAVMNVGAP…SRKRSGETSI (379 aa)). Beta-D-fructose 2,6-bisphosphate contacts are provided by residues R473 and 530–534 (TVSNN). S532 carries an O-linked (GlcNAc) serine glycan. K559 carries the post-translational modification N6-(2-hydroxyisobutyryl)lysine. Residues R568, 575-577 (MGG), E631, R657, and 663-666 (HMQQ) each bind beta-D-fructose 2,6-bisphosphate. Phosphoserine is present on S669. Beta-D-fructose 2,6-bisphosphate is bound at residue R737. S777 is modified (phosphoserine).

It belongs to the phosphofructokinase type A (PFKA) family. ATP-dependent PFK group I subfamily. Eukaryotic two domain clade 'E' sub-subfamily. As to quaternary structure, homo- and heterotetramers. Phosphofructokinase (PFK) enzyme functions as a tetramer composed of different combinations of 3 types of subunits, called PFKM (M), PFKL (L) and PFKP (P). The composition of the PFK tetramer differs according to the tissue type it is present in. The kinetic and regulatory properties of the tetrameric enzyme are dependent on the subunit composition, hence can vary across tissues. Interacts (via C-terminus) with HK1 (via N-terminal spermatogenic cell-specific region). Requires Mg(2+) as cofactor. In terms of processing, glcNAcylation decreases enzyme activity.

The protein resides in the cytoplasm. It catalyses the reaction beta-D-fructose 6-phosphate + ATP = beta-D-fructose 1,6-bisphosphate + ADP + H(+). It participates in carbohydrate degradation; glycolysis; D-glyceraldehyde 3-phosphate and glycerone phosphate from D-glucose: step 3/4. Allosterically activated by ADP, AMP, or fructose 2,6-bisphosphate, and allosterically inhibited by ATP or citrate. In terms of biological role, catalyzes the phosphorylation of D-fructose 6-phosphate to fructose 1,6-bisphosphate by ATP, the first committing step of glycolysis. This Canis lupus familiaris (Dog) protein is ATP-dependent 6-phosphofructokinase, muscle type (PFKM).